We begin with the raw amino-acid sequence, 94 residues long: Alpha-conotoxin-like Cp20.2 (94 aa).

Residues 1–24 form the signal peptide; the sequence is MPKLAVVLLVLLILPLSYFDAAGG. Positions 25–45 are excised as a propeptide; it reads QAVQWDRRGNGLARYLQRGDR. Disulfide bonds link cysteine 63-cysteine 72, cysteine 68-cysteine 80, cysteine 73-cysteine 90, and cysteine 78-cysteine 92.

Belongs to the conotoxin D superfamily. In terms of assembly, hetero-, homo- or pseudo-homodimer (identical sequence, different post-translational modifications). In terms of tissue distribution, expressed by the venom duct.

Its subcellular location is the secreted. Alpha-conotoxins act on postsynaptic membranes, they bind to the nicotinic acetylcholine receptors (nAChR) and thus inhibit them. Through its two C-terminal domains, this homodimeric protein would bind to two nAChR allosteric sites, located outside the nAChR C-loop of the principal binding face and at the adjacent binding interface in a clockwise direction. This toxin specifically blocks mammalian neuronal nAChR of the alpha-7/CHRNA7, alpha-3-beta-2/CHRNA3-CHRNB2 and alpha-4-beta-2/CHRNA4-CHRNB2 subtypes. The chain is Alpha-conotoxin-like Cp20.2 from Conus capitaneus (Captain cone).